Reading from the N-terminus, the 593-residue chain is UvrABC system protein C (593 aa).

The 78-residue stretch at 17–94 (MEPGCYLMKD…IKQYQPRYNI (78 aa)) folds into the GIY-YIG domain. Positions 199-234 (KTILKSLEERMLTASESLDFERAKEYRDLIQHIQNL) constitute a UVR domain.

This sequence belongs to the UvrC family. As to quaternary structure, interacts with UvrB in an incision complex.

Its subcellular location is the cytoplasm. Its function is as follows. The UvrABC repair system catalyzes the recognition and processing of DNA lesions. UvrC both incises the 5' and 3' sides of the lesion. The N-terminal half is responsible for the 3' incision and the C-terminal half is responsible for the 5' incision. This Staphylococcus aureus (strain bovine RF122 / ET3-1) protein is UvrABC system protein C.